Reading from the N-terminus, the 628-residue chain is Isoleucine--tRNA ligase (628 aa).

The 'KMSKS' region motif lies at 505-509; that stretch reads KMSKR. An ATP-binding site is contributed by K508.

It belongs to the class-I aminoacyl-tRNA synthetase family.

The enzyme catalyses tRNA(Ile) + L-isoleucine + ATP = L-isoleucyl-tRNA(Ile) + AMP + diphosphate. This chain is Isoleucine--tRNA ligase, found in Antonospora locustae (Microsporidian parasite).